Here is a 568-residue protein sequence, read N- to C-terminus: MTQSTIPNPRLDESRTIIAPTGTQLNAKSWLTEAPLRMLMNNLHPDVAEHPHALVVYGGIGRAARNWECYDKIVEVLKRLEDDETLIVQSGKPVGVFKTHTNAPRVLIANSNLVPHWANWEHFNELDKEGLMMYGQMTAGSWIYIGSQGIVQGTYETFVAMARQHFNGDAKGRWVLTGGLGGMGGAQPLAATMAGFSMLAVECDESRIDYRLRTGYVDSKATTLDEALAIIEESKQTGKPVSVGLLGNAADVYADIVKRGIVPDVTTDQTSAHDPLNGYLPQGWSMEHAAAMRLEDEAIVVKAAKQSMAVQVQAMLALQEAGSATVDYGNNIRQMALEEGVENAFDFPGFVPAYIRPLFCEGIGPFRWVALSGDPEDIYKTDQKVKELIPDNPHLHNWLDMARERIQFQGLPARICWVGLKDRARLGKAFNEMVKNGELKAPIVIGRDHLDSGSVASPNRETEGMMDGSDAVSDWPLLNALLNTASGATWVSLHHGGGVGMGFSQHSGMVIVCDGTDDAAERVGRVLRNDPATGVMRHADAGYDIAINCAEEQGLDLPMVNTKNTHSK.

Residues 58–59, Q136, 182–184, E202, R207, 248–249, 269–273, 279–280, and Y328 contribute to the NAD(+) site; these read GG, GMG, NA, QTSAH, and YL. C416 is a catalytic residue. G498 contacts NAD(+).

Belongs to the urocanase family. NAD(+) is required as a cofactor.

It is found in the cytoplasm. The catalysed reaction is 4-imidazolone-5-propanoate = trans-urocanate + H2O. It participates in amino-acid degradation; L-histidine degradation into L-glutamate; N-formimidoyl-L-glutamate from L-histidine: step 2/3. In terms of biological role, catalyzes the conversion of urocanate to 4-imidazolone-5-propionate. This chain is Urocanate hydratase, found in Photobacterium profundum (strain SS9).